Here is a 65-residue protein sequence, read N- to C-terminus: Large ribosomal subunit protein uL29 (65 aa).

This sequence belongs to the universal ribosomal protein uL29 family.

The sequence is that of Large ribosomal subunit protein uL29 from Natranaerobius thermophilus (strain ATCC BAA-1301 / DSM 18059 / JW/NM-WN-LF).